The sequence spans 246 residues: NAD-dependent protein deacetylase (246 aa).

Residues 1-246 form the Deacetylase sirtuin-type domain; it reads MKKPDIQQLK…VIEEIVNSNS (246 aa). The NAD(+) site is built by A25, F36, R37, Q106, I108, D109, and H124. Residue F36 participates in nicotinamide binding. The nicotinamide site is built by I108 and D109. H124 serves as the catalytic Proton acceptor. C132, C135, C152, and C155 together coordinate Zn(2+). Positions 193, 194, 216, and 233 each coordinate NAD(+).

It belongs to the sirtuin family. Class U subfamily. Zn(2+) is required as a cofactor.

The protein localises to the cytoplasm. The catalysed reaction is N(6)-acetyl-L-lysyl-[protein] + NAD(+) + H2O = 2''-O-acetyl-ADP-D-ribose + nicotinamide + L-lysyl-[protein]. In terms of biological role, NAD-dependent protein deacetylase which modulates the activities of several enzymes which are inactive in their acetylated form. The protein is NAD-dependent protein deacetylase of Staphylococcus epidermidis (strain ATCC 35984 / DSM 28319 / BCRC 17069 / CCUG 31568 / BM 3577 / RP62A).